An 86-amino-acid chain; its full sequence is Cell division topological specificity factor (86 aa).

The protein belongs to the MinE family.

Functionally, prevents the cell division inhibition by proteins MinC and MinD at internal division sites while permitting inhibition at polar sites. This ensures cell division at the proper site by restricting the formation of a division septum at the midpoint of the long axis of the cell. The sequence is that of Cell division topological specificity factor from Albidiferax ferrireducens (strain ATCC BAA-621 / DSM 15236 / T118) (Rhodoferax ferrireducens).